Consider the following 319-residue polypeptide: Pantothenate kinase (319 aa).

Residue 97 to 104 participates in ATP binding; it reads GSVAVGKS.

Belongs to the prokaryotic pantothenate kinase family.

Its subcellular location is the cytoplasm. The enzyme catalyses (R)-pantothenate + ATP = (R)-4'-phosphopantothenate + ADP + H(+). It participates in cofactor biosynthesis; coenzyme A biosynthesis; CoA from (R)-pantothenate: step 1/5. The polypeptide is Pantothenate kinase (Chelativorans sp. (strain BNC1)).